Reading from the N-terminus, the 70-residue chain is Small ribosomal subunit protein bS21A (70 aa).

The protein belongs to the bacterial ribosomal protein bS21 family.

The protein is Small ribosomal subunit protein bS21A of Paraburkholderia xenovorans (strain LB400).